A 277-amino-acid polypeptide reads, in one-letter code: Protein HEAT-INDUCED TAS1 TARGET 1 (277 aa).

The protein belongs to the heat induced plant HTT protein family. In terms of assembly, interacts with the heat shock proteins HSP70-14 and At2g33735/HSP40, and with NFYC2 in both cytoplasm and nucleus. In terms of tissue distribution, expressed ubiquitously, including in seedlings, leaves, stems, inflorescences and siliques.

It localises to the cytoplasm. Its subcellular location is the nucleus. Functionally, mediates both basal and acquired thermotolerance via HSFA1s-directed pathways (e.g. HSFA1A, HSFA1B, and HSFA1D). Triggers the expression of HSFA1A and HSFA1B. This is Protein HEAT-INDUCED TAS1 TARGET 1 from Arabidopsis thaliana (Mouse-ear cress).